The chain runs to 179 residues: Alkyl hydroperoxide reductase AhpD (179 aa).

The active-site Proton donor is Cys130. An intrachain disulfide couples Cys130 to Cys133. The active-site Cysteine sulfenic acid (-SOH) intermediate is the Cys133.

This sequence belongs to the AhpD family. In terms of assembly, homotrimer.

The enzyme catalyses N(6)-[(R)-dihydrolipoyl]-L-lysyl-[lipoyl-carrier protein] + a hydroperoxide = N(6)-[(R)-lipoyl]-L-lysyl-[lipoyl-carrier protein] + an alcohol + H2O. Functionally, antioxidant protein with alkyl hydroperoxidase activity. Required for the reduction of the AhpC active site cysteine residues and for the regeneration of the AhpC enzyme activity. The protein is Alkyl hydroperoxide reductase AhpD of Rhodococcus erythropolis (strain PR4 / NBRC 100887).